A 313-amino-acid polypeptide reads, in one-letter code: Short-chain dehydrogenase/reductase family 9C member 7 (313 aa).

An NADP(+)-binding site is contributed by 29 to 53 (FITGCDSGFGNLLAKQLVDRGMKVL). Ser-160 is a substrate binding site. Tyr-172 acts as the Proton acceptor in catalysis. A Phosphoserine modification is found at Ser-185.

This sequence belongs to the short-chain dehydrogenases/reductases (SDR) family. Highly expressed in liver.

The protein resides in the cytoplasm. It carries out the reaction a N-[omega-(9R,10R)-epoxy-(13R)-hydroxy-(11E)-octadecenoyloxy]acyl-beta-D-glucosyl-(1&lt;-&gt;1)-sphing-4E-enine + NAD(+) = a N-[omega-(9R,10R)-epoxy-13-oxo-(11E)-octadecenoyloxy]acyl-beta-D-glucosyl-(1&lt;-&gt;1)-sphing-4E-enine + NADH + H(+). It catalyses the reaction a N-[omega-(9R,10R)-epoxy-(13R)-hydroxy-(11E)-octadecenoyloxy]-acylsphing-4E-enine + NAD(+) = a N-[omega-(9R,10R)-epoxy-13-oxo-(11E)-octadecenoyloxy]-acylsphing-4E-enine + NADH + H(+). In terms of biological role, plays a crucial role in the formation of the epidermal permeability barrier. Catalyzes the NAD+-dependent dehydrogenation of the linoleate 9,10-trans-epoxy-11E-13-alcohol esterified in omega-O-acylceramides (such as in N-[omega-(9R,10R)-epoxy-(13R)-hydroxy-(11E)-octadecenoyloxy]-acylsphing-4E-enine) to the corresponding 13-ketone, the reactive moiety required for binding of epidermal ceramides to proteins. Displays weak conversion of all-trans-retinal to all-trans-retinol in the presence of NADH. Has apparently no steroid dehydrogenase activity. The sequence is that of Short-chain dehydrogenase/reductase family 9C member 7 (Sdr9c7) from Mus musculus (Mouse).